Here is a 541-residue protein sequence, read N- to C-terminus: Membrane protein insertase YidC (541 aa).

Transmembrane regions (helical) follow at residues 6–26 (NLLL…WESD), 326–346 (VVDY…LMFF), 349–369 (LVHN…GLLY), 420–440 (GGCL…WVLL), 457–477 (LSVQ…MWAM), and 500–520 (MIFT…WLVG).

This sequence belongs to the OXA1/ALB3/YidC family. Type 1 subfamily. As to quaternary structure, interacts with the Sec translocase complex via SecD. Specifically interacts with transmembrane segments of nascent integral membrane proteins during membrane integration.

Its subcellular location is the cell inner membrane. Functionally, required for the insertion and/or proper folding and/or complex formation of integral membrane proteins into the membrane. Involved in integration of membrane proteins that insert both dependently and independently of the Sec translocase complex, as well as at least some lipoproteins. Aids folding of multispanning membrane proteins. The protein is Membrane protein insertase YidC of Shewanella amazonensis (strain ATCC BAA-1098 / SB2B).